The chain runs to 144 residues: Transcription antitermination protein NusB (144 aa).

The protein belongs to the NusB family.

Involved in transcription antitermination. Required for transcription of ribosomal RNA (rRNA) genes. Binds specifically to the boxA antiterminator sequence of the ribosomal RNA (rrn) operons. The sequence is that of Transcription antitermination protein NusB from Paraburkholderia xenovorans (strain LB400).